We begin with the raw amino-acid sequence, 270 residues long: Pyrroline-5-carboxylate reductase (270 aa).

Belongs to the pyrroline-5-carboxylate reductase family.

It is found in the cytoplasm. It catalyses the reaction L-proline + NADP(+) = (S)-1-pyrroline-5-carboxylate + NADPH + 2 H(+). The enzyme catalyses L-proline + NAD(+) = (S)-1-pyrroline-5-carboxylate + NADH + 2 H(+). Its pathway is amino-acid biosynthesis; L-proline biosynthesis; L-proline from L-glutamate 5-semialdehyde: step 1/1. Functionally, catalyzes the reduction of 1-pyrroline-5-carboxylate (PCA) to L-proline. The polypeptide is Pyrroline-5-carboxylate reductase (Corynebacterium melassecola).